A 75-amino-acid chain; its full sequence is Small ribosomal subunit protein bS18 (75 aa).

The protein belongs to the bacterial ribosomal protein bS18 family. In terms of assembly, part of the 30S ribosomal subunit. Forms a tight heterodimer with protein bS6.

In terms of biological role, binds as a heterodimer with protein bS6 to the central domain of the 16S rRNA, where it helps stabilize the platform of the 30S subunit. This Klebsiella pneumoniae (strain 342) protein is Small ribosomal subunit protein bS18.